Here is a 174-residue protein sequence, read N- to C-terminus: Probable NAD(P)H dehydrogenase subunit CRR3, chloroplastic (174 aa).

Residues 1-54 constitute a chloroplast transit peptide; that stretch reads MAVLSTIYSITRASTPTMASLTNDSPSPLPSSSPSKLPSPTSPSKKPLKLRQVS. The span at 14–24 shows a compositional bias: polar residues; the sequence is STPTMASLTND. The interval 14 to 71 is disordered; that stretch reads STPTMASLTNDSPSPLPSSSPSKLPSPTSPSKKPLKLRQVSKQMGSQNQQRRGNKPSI. The span at 30–45 shows a compositional bias: low complexity; sequence PSSSPSKLPSPTSPSK. The span at 53–64 shows a compositional bias: polar residues; the sequence is VSKQMGSQNQQR. The chain crosses the membrane as a helical span at residues 140 to 160; that stretch reads FTIQWILPIWIMSLLVACGVI.

Its subcellular location is the plastid. The protein localises to the chloroplast thylakoid membrane. Its function is as follows. Probable subunit of the chloroplast NAD(P)H dehydrogenase (NDH) complex of the photosynthetic electron transport chain. Required for both formation and activity of NDH. May function in assembly or stabilization of the NDH complex. The sequence is that of Probable NAD(P)H dehydrogenase subunit CRR3, chloroplastic from Arabidopsis thaliana (Mouse-ear cress).